The primary structure comprises 34 residues: Calcitonin-like peptide 2 (34 aa).

Residues C2 and C7 are joined by a disulfide bond. A Phenylalanine amide modification is found at F34.

The chain is Calcitonin-like peptide 2 from Odorrana schmackeri (Schmacker's frog).